The following is a 502-amino-acid chain: Glycerol kinase (502 aa).

Thr-14 is an ADP binding site. ATP contacts are provided by Thr-14, Thr-15, and Ser-16. Thr-14 is a sn-glycerol 3-phosphate binding site. Arg-18 is a binding site for ADP. Sn-glycerol 3-phosphate is bound by residues Arg-84, Glu-85, Tyr-136, and Asp-246. Arg-84, Glu-85, Tyr-136, Asp-246, and Gln-247 together coordinate glycerol. Positions 268 and 311 each coordinate ADP. The ATP site is built by Thr-268, Gly-311, Gln-315, and Gly-412. 2 residues coordinate ADP: Gly-412 and Asn-416.

The protein belongs to the FGGY kinase family. Homotetramer and homodimer (in equilibrium). Heterodimer with EIIA-Glc. Binds 1 zinc ion per glycerol kinase EIIA-Glc dimer. The zinc ion is important for dimerization.

It catalyses the reaction glycerol + ATP = sn-glycerol 3-phosphate + ADP + H(+). It participates in polyol metabolism; glycerol degradation via glycerol kinase pathway; sn-glycerol 3-phosphate from glycerol: step 1/1. Activity of this regulatory enzyme is affected by several metabolites. Allosterically and non-competitively inhibited by fructose 1,6-bisphosphate (FBP) and unphosphorylated phosphocarrier protein EIIA-Glc (III-Glc), an integral component of the bacterial phosphotransferase (PTS) system. Its function is as follows. Key enzyme in the regulation of glycerol uptake and metabolism. Catalyzes the phosphorylation of glycerol to yield sn-glycerol 3-phosphate. This chain is Glycerol kinase, found in Escherichia fergusonii (strain ATCC 35469 / DSM 13698 / CCUG 18766 / IAM 14443 / JCM 21226 / LMG 7866 / NBRC 102419 / NCTC 12128 / CDC 0568-73).